Here is a 202-residue protein sequence, read N- to C-terminus: Dephospho-CoA kinase (202 aa).

The region spanning 6–202 (KISVTGDPSS…QCFKALKGTI (197 aa)) is the DPCK domain. 14–19 (SSGKTE) lines the ATP pocket.

It belongs to the CoaE family.

It localises to the cytoplasm. The enzyme catalyses 3'-dephospho-CoA + ATP = ADP + CoA + H(+). It functions in the pathway cofactor biosynthesis; coenzyme A biosynthesis; CoA from (R)-pantothenate: step 5/5. Its function is as follows. Catalyzes the phosphorylation of the 3'-hydroxyl group of dephosphocoenzyme A to form coenzyme A. This is Dephospho-CoA kinase from Chlamydia trachomatis serovar D (strain ATCC VR-885 / DSM 19411 / UW-3/Cx).